The following is a 269-amino-acid chain: Gap junction gamma-3 protein (269 aa).

The Extracellular portion of the chain corresponds to M1–R33. Residues F34–V54 form a helical membrane-spanning segment. Topologically, residues F55 to R86 are cytoplasmic. A helical membrane pass occupies residues F87 to L107. At Y108 to L145 the chain is on the extracellular side. A helical membrane pass occupies residues L146–V166. The Cytoplasmic portion of the chain corresponds to Q167 to N205. The helical transmembrane segment at I206–G226 threads the bilayer. Over L227–F269 the chain is Extracellular. S261 carries the post-translational modification Phosphoserine.

It belongs to the connexin family. Gamma-type subfamily. In terms of assembly, a connexon is composed of a hexamer of connexins. In terms of tissue distribution, CNS specific. Expression is restricted to brain, spinal cord, and sciatic nerve.

Its subcellular location is the cell membrane. It localises to the cell junction. The protein resides in the gap junction. Functionally, one gap junction consists of a cluster of closely packed pairs of transmembrane channels, the connexons, through which materials of low MW diffuse from one cell to a neighboring cell. In Mus musculus (Mouse), this protein is Gap junction gamma-3 protein (Gjc3).